The following is a 109-amino-acid chain: Putative pterin-4-alpha-carbinolamine dehydratase (109 aa).

Belongs to the pterin-4-alpha-carbinolamine dehydratase family.

The catalysed reaction is (4aS,6R)-4a-hydroxy-L-erythro-5,6,7,8-tetrahydrobiopterin = (6R)-L-erythro-6,7-dihydrobiopterin + H2O. The protein is Putative pterin-4-alpha-carbinolamine dehydratase of Halorhodospira halophila (strain DSM 244 / SL1) (Ectothiorhodospira halophila (strain DSM 244 / SL1)).